The primary structure comprises 226 residues: Reticulon-like protein B16 (226 aa).

Positions 41-224 (AADLLLWRRR…RLSWSLSKDK (184 aa)) constitute a Reticulon domain. A run of 3 helical transmembrane segments spans residues 54 to 74 (LGVIIISTVAWLIFEFSGLPF), 75 to 95 (LSVSSDVLLIVIMISFVHARV), and 149 to 169 (VVICLWLLSAIGSYISLCTLL).

It localises to the endoplasmic reticulum membrane. The sequence is that of Reticulon-like protein B16 (RTNLB16) from Arabidopsis thaliana (Mouse-ear cress).